The chain runs to 240 residues: 2-C-methyl-D-erythritol 2,4-cyclodiphosphate synthase, apicoplast (240 aa).

A divalent metal cation contacts are provided by Asp71 and His73. Residues 71 to 73 (DIH) and 115 to 116 (HS) contribute to the 4-CDP-2-C-methyl-D-erythritol 2-phosphate site. His123 is a binding site for a divalent metal cation. 4-CDP-2-C-methyl-D-erythritol 2-phosphate contacts are provided by residues 137–139 (DIG), 142–146 (FPDKD), 181–187 (AQVPKIS), and 212–214 (GKT).

The protein belongs to the IspF family. As to quaternary structure, homotrimer. The cofactor is a divalent metal cation.

The protein localises to the plastid. It localises to the apicoplast. It catalyses the reaction 4-CDP-2-C-methyl-D-erythritol 2-phosphate = 2-C-methyl-D-erythritol 2,4-cyclic diphosphate + CMP. The protein operates within isoprenoid biosynthesis; isopentenyl diphosphate biosynthesis via DXP pathway; isopentenyl diphosphate from 1-deoxy-D-xylulose 5-phosphate: step 4/6. In the mevalonate-independent isoprenoid biosynthetic pathway, converts 4-diphosphocytidyl-2C-methyl-D-erythritol 2-phosphate into 2C-methyl-D-erythritol 2,4-cyclodiphosphate and CMP. The sequence is that of 2-C-methyl-D-erythritol 2,4-cyclodiphosphate synthase, apicoplast from Plasmodium falciparum (isolate 3D7).